The chain runs to 652 residues: Nucleolar GTP-binding protein 1 (652 aa).

One can recognise an OBG-type G domain in the interval 169-341 (RTIIICGFPN…VKTEACERLL (173 aa)). Residues 175–182 (GFPNVGKS), 221–225 (DTPGI), and 289–292 (NKID) contribute to the GTP site. Positions 501-521 (RLSSRKNKPVIPRNKQPKVRD) are disordered.

This sequence belongs to the TRAFAC class OBG-HflX-like GTPase superfamily. OBG GTPase family. NOG subfamily.

The protein localises to the nucleus. Its subcellular location is the nucleolus. Functionally, involved in the biogenesis of the 60S ribosomal subunit. Required for normal assembly of the mitotic spindle. May be involved in both centrosome-dependent and centrosome-independent spindle assembly programs. Acts as a TP53 repressor, preventing TP53 stabilization and cell cycle arrest. The polypeptide is Nucleolar GTP-binding protein 1 (Drosophila melanogaster (Fruit fly)).